The primary structure comprises 324 residues: tRNA pseudouridine synthase B (324 aa).

D49 functions as the Nucleophile in the catalytic mechanism. The segment at 87 to 107 is disordered; that stretch reads RSTDDLEGQPTKTSDKRPSRE.

Belongs to the pseudouridine synthase TruB family. Type 1 subfamily.

The catalysed reaction is uridine(55) in tRNA = pseudouridine(55) in tRNA. Its function is as follows. Responsible for synthesis of pseudouridine from uracil-55 in the psi GC loop of transfer RNAs. The protein is tRNA pseudouridine synthase B of Brucella abortus (strain 2308).